The chain runs to 582 residues: Kelch-like protein diablo (582 aa).

A disordered region spans residues 1-22 (MGDVLISDRPPSPARLSHTSEK). Residues 41 to 108 (CDVVINVSGR…CYTSHIVVEE (68 aa)) enclose the BTB domain. In terms of domain architecture, BACK spans 143–245 (CLGIRAFADT…SPKFLVGTVG (103 aa)). 6 Kelch repeats span residues 292–338 (VLFA…VLND), 340–386 (LYAV…VLDG), 387–433 (FLYA…VLGG), 435–480 (LYAI…VFNN), 482–527 (IYAV…VVNG), and 528–574 (QLYA…VMRA).

Its pathway is protein modification; protein ubiquitination. In terms of biological role, probable substrate-specific adapter of an E3 ubiquitin-protein ligase complex which mediates the ubiquitination and subsequent proteasomal degradation of target proteins. May have a role in synapse differentiation and growth. This chain is Kelch-like protein diablo, found in Culex quinquefasciatus (Southern house mosquito).